Consider the following 316-residue polypeptide: Pantothenate kinase (316 aa).

95–102 lines the ATP pocket; sequence GSVAVGKS.

Belongs to the prokaryotic pantothenate kinase family.

It is found in the cytoplasm. The catalysed reaction is (R)-pantothenate + ATP = (R)-4'-phosphopantothenate + ADP + H(+). Its pathway is cofactor biosynthesis; coenzyme A biosynthesis; CoA from (R)-pantothenate: step 1/5. This is Pantothenate kinase from Yersinia pseudotuberculosis serotype O:3 (strain YPIII).